The sequence spans 310 residues: 2-dehydro-3-deoxygluconokinase (310 aa).

Residues 29-33 (GDTLN), Tyr89, 103-105 (YWR), and Arg171 contribute to the substrate site. Residues 169 to 171 (NYR), 229 to 234 (KRGADA), and 262 to 265 (AAGD) each bind ATP. Asp265 is a binding site for substrate. Residue Asp265 is the Proton acceptor of the active site.

It belongs to the carbohydrate kinase PfkB family.

It carries out the reaction 2-dehydro-3-deoxy-D-gluconate + ATP = 2-dehydro-3-deoxy-6-phospho-D-gluconate + ADP + H(+). Its pathway is carbohydrate acid metabolism; 2-dehydro-3-deoxy-D-gluconate degradation; D-glyceraldehyde 3-phosphate and pyruvate from 2-dehydro-3-deoxy-D-gluconate: step 1/2. In terms of biological role, catalyzes the phosphorylation of 2-keto-3-deoxygluconate (KDG) to produce 2-keto-3-deoxy-6-phosphogluconate (KDPG). This Dickeya dadantii (strain 3937) (Erwinia chrysanthemi (strain 3937)) protein is 2-dehydro-3-deoxygluconokinase.